We begin with the raw amino-acid sequence, 279 residues long: CDP-paratose synthase (279 aa).

Tyr-115 functions as the Proton acceptor in the catalytic mechanism.

This sequence belongs to the NAD(P)-dependent epimerase/dehydratase family.

The catalysed reaction is CDP-alpha-D-paratose + NADP(+) = CDP-4-dehydro-3,6-dideoxy-alpha-D-glucose + NADPH + H(+). Its pathway is nucleotide-sugar biosynthesis; CDP-3,6-dideoxy-D-mannose biosynthesis; CDP-3,6-dideoxy-D-mannose from CTP and alpha-D-glucose 1-phosphate: step 4/5. Its function is as follows. Catalyzes synthesis of paratose and tyvelose, unusual 3,6-dideoxyhexose sugars that form part of the O-antigen in the lipopolysaccharides of several enteric bacteria. In Salmonella typhi, this protein is CDP-paratose synthase (rfbS).